The chain runs to 312 residues: Cytochrome c biogenesis protein CcsA (312 aa).

8 helical membrane-spanning segments follow: residues 9–29, 44–64, 71–91, 111–131, 143–163, 216–236, 251–271, and 277–297; these read ILTH…LITF, GIIV…ISSG, LYES…IPYF, GFAT…VPAL, MILG…LLVI, VISL…VWAN, WAFI…NINL, and AIIA…VNLL.

The protein belongs to the CcmF/CycK/Ccl1/NrfE/CcsA family. May interact with Ccs1.

The protein resides in the plastid. Its subcellular location is the chloroplast thylakoid membrane. Functionally, required during biogenesis of c-type cytochromes (cytochrome c6 and cytochrome f) at the step of heme attachment. The chain is Cytochrome c biogenesis protein CcsA from Atropa belladonna (Belladonna).